An 832-amino-acid polypeptide reads, in one-letter code: MVNFTVEQIREIMGKPHNIRNMSVIAHVDHGKSTLTDSLVCKAGIIASKAAGDARFTDTRADEQERCITIKSTGISLFFEHDLEDGKGRQPFLINLIDSPGHVDFSSEVTAALRVTDGALVVVDAVDGVCIQTETVLRQALNERIRPVLHVNKVDRALLELQWEAEDIYQNFTRVIENVNVIISTYSDELMGDVQVFPEKGTVSFGSGLHGWAFTIEKFARIYAKKFGVEKSKMMQRLWGDNFFNPETKKFTKTQEPGSKRAFCQFIMEPICQLFSSIMNGDKAKYEKMLVNLGVELKGDDKALVDKPLLKKVMQLWLSAGDTLLEMIVTHLPSPAAAQKYRVENLYEGPQDDETAKGIRNCDPDAPLCMFVSKMVPTSDKGRFYAFGRVFSGTVATGQKVRIQGPRYVPGGKEDLNIKNIQRTVLMMGRYVEQIPDVPAGNTVGLVGIDQYLLKSGTITTSETAHNIASMKYSVSPVVRVAVRPKDNKELPKLVEGLKKLSKSDPLVVCSKEETGEHIIAGCGELHVEICLQDLQQEYAQIEIVASDPIVSYRETVVNLSNQTCLSKSPNKHNRLYMTAEPLPDGLTDDIEEGKVSPRDDPKERSNLLHDKYGFDKNAAMKIWCFGPETTGPNIMVDVTTGIQYLTEIKDHCNSAFQWATKEGILCEEDMRGIRFNLLDVTLHADAIHRGAGQITPTCRRVMYAAALTASPRLLEPMFLVEISAPQEVVGGIYATLNQRRGHVFHEEPKSGTPQVEIKAYLPVADSFKFTTVLRAATSGKAFPQCVFDHWELINGDPLEKGSKTEELVKAIRRRKNIKEEIPALDNYLDKL.

Residues 17-336 enclose the tr-type G domain; sequence HNIRNMSVIA…MIVTHLPSPA (320 aa). A GTP-binding site is contributed by 26–33; the sequence is AHVDHGKS. A phosphothreonine mark is found at Thr-57 and Thr-59. Residues 152 to 155 and 207 to 209 each bind GTP; these read NKVD and SGL. The segment at 580–608 is disordered; sequence AEPLPDGLTDDIEEGKVSPRDDPKERSNL. Positions 593–608 are enriched in basic and acidic residues; that stretch reads EGKVSPRDDPKERSNL. A Diphthamide modification is found at His-689.

This sequence belongs to the TRAFAC class translation factor GTPase superfamily. Classic translation factor GTPase family. EF-G/EF-2 subfamily.

Its subcellular location is the cytoplasm. The catalysed reaction is GTP + H2O = GDP + phosphate + H(+). Catalyzes the GTP-dependent ribosomal translocation step during translation elongation. During this step, the ribosome changes from the pre-translocational (PRE) to the post-translocational (POST) state as the newly formed A-site-bound peptidyl-tRNA and P-site-bound deacylated tRNA move to the P and E sites, respectively. Catalyzes the coordinated movement of the two tRNA molecules, the mRNA and conformational changes in the ribosome. The polypeptide is Elongation factor 2 (Cryptosporidium parvum).